The primary structure comprises 680 residues: WD repeat-containing protein 48 homolog (680 aa).

8 WD repeats span residues 26–65 (QHRN…SEKY), 71–110 (HHND…CMST), 113–152 (THRD…ALTA), 164–203 (GSKD…RIMK), 206–245 (GHTE…CVQT), 248–287 (VHKE…NKTL), 290–329 (EEQA…RCTL), and 350–389 (KGGA…KKEQ). The segment at 592 to 616 (ETTPSGGNANNSLQNSQSDANSEGS) is disordered.

The protein belongs to the WD repeat WDR48 family. As to quaternary structure, catalytic component of the Usp12-46 deubiquitylase complex consisting of Usp12-46, Wdr20 and Uaf1; regulatory subunit that, together wtih Wdr20, stabilizes Usp12-46. The Usp12-46 deubiquitylase complex associates with arr/arrow; the interaction leads to deubiquitination and stabilization of arr/arrow.

Its function is as follows. Regulatory component of the Usp12-46 deubiquitylase complex. activates deubiquitination by increasing the catalytic turnover without increasing the affinity of deubiquitinating enzymes for the substrate. The complex deubiquitylates the wg/wingless-signaling receptor arr/arrow, which stabilizes the receptor and increases its concentration at the cell surface; this enhances the sensitivity of cells to wg/wingless-signal stimulation. This increases the amplitude and spatial range of the signaling response to the wg/wingless morphogen gradient, facilitating the precise concentration-dependent regulation of its target genes. Together with Wdr20 and Usp12-46 required for wg/wingless-mediated signaling in the wing imaginal disc and for wg/wingless-dependent regulation of intestinal stem cell proliferation. The chain is WD repeat-containing protein 48 homolog from Drosophila sechellia (Fruit fly).